The following is a 113-amino-acid chain: Phosphorelay protein LuxU (113 aa).

The 96-residue stretch at 18–113 (GEENVPILVN…THQCYSDLVH (96 aa)) folds into the HPt domain. His57 carries the phosphohistidine modification.

As to quaternary structure, monomer.

Functionally, phosphorelay protein which receives sensory signals from a sensory kinase and transmit them to LuxO. At low cell density, a phosphoryl group is transferred from the sensory kinase, probably on His-57 and this phosphoryl group is further transferred to LuxO. The protein is Phosphorelay protein LuxU (luxU) of Vibrio cholerae serotype O1 (strain ATCC 39315 / El Tor Inaba N16961).